An 890-amino-acid polypeptide reads, in one-letter code: MSGVNEIRSAFLNYFGKDGHEIVPSSPLVPRNDPTLMFTNAGMVQFKNVFTGVEKRANHRATTSQKCVRAGGKHNDLDNVGYTARHHTFFEMLGNFSFGDYFKDHAIELAWNLITKEFGLPKERLLVTVFSEDDEAFALWKKIAGLPDSKIIRIPTSDNFWQMGDTGPCGPCSEIFFDHGDHIPGGPPGSPEEDGDRFIEIWNLVFMQFDQIAPGQRNPLPKPSIDTGMGLERIAAVLQGKHDNYDIDLFQALIRAIAELTGADPKGEHKASLRVIADHLRASSFLIADGVLPSNEGRGYVLRRIMRRAMRHGQLLGATEPLMWRLVWALVREMGQAYPELVRAEPMIEETLRLEETRFRKTLDRGLIILDEKSSTLKKGDMFDGETAFTLYDTYGFPLDLTQDALRNRGISVDIASFTDAMDRQRAKARASWAGSGDTATETVWFGLREQLGATEFLGYETETAEGVVAALVKDGQKVDQLKVGEAGAIVLNQTPFYAESGGQVGDTGVMTGEGVRFRVTETQKKAHDLFVHLGTVEQGTLTPDTALLLEVDHTRRSSIRANHSATHLLHEALRQVLGDHIAQKGSLVAEDRLRFDFVHQKPISADELRRVEDIANEVVLENDEVTTRLMAVDDAREAGARALFGEKYGDEVRVVTMGKSARQHGSNALGWSVELCGGTHVRRTGDIGLISITGESAVASGVRRIEALTGRFARQSANAAIDTAKATAAELRTSVDDMPARVAALMDERKKLERELAEARKKLAMGGGGAAAANGEAGVREVGGVKLLARAVEGIEIKDLKSLVDQGKKQLGSGVIALVATSADGKGSIVVGVTPDLVARFSAVDLVRKASEVLGGKGGGGKPDMAQAGGPDGSKAQAALDAIAEAIGG.

Zn(2+)-binding residues include H564, H568, C677, and H681.

It belongs to the class-II aminoacyl-tRNA synthetase family. Zn(2+) is required as a cofactor.

The protein localises to the cytoplasm. It carries out the reaction tRNA(Ala) + L-alanine + ATP = L-alanyl-tRNA(Ala) + AMP + diphosphate. In terms of biological role, catalyzes the attachment of alanine to tRNA(Ala) in a two-step reaction: alanine is first activated by ATP to form Ala-AMP and then transferred to the acceptor end of tRNA(Ala). Also edits incorrectly charged Ser-tRNA(Ala) and Gly-tRNA(Ala) via its editing domain. The chain is Alanine--tRNA ligase from Rhodopseudomonas palustris (strain BisB18).